A 368-amino-acid chain; its full sequence is DNA replication and repair protein RecF (368 aa).

30–37 (GNNAQGKT) contributes to the ATP binding site.

This sequence belongs to the RecF family.

The protein localises to the cytoplasm. Its function is as follows. The RecF protein is involved in DNA metabolism; it is required for DNA replication and normal SOS inducibility. RecF binds preferentially to single-stranded, linear DNA. It also seems to bind ATP. The sequence is that of DNA replication and repair protein RecF from Streptococcus pyogenes serotype M12 (strain MGAS9429).